Here is a 233-residue protein sequence, read N- to C-terminus: Antiholin-like protein LrgB (233 aa).

Transmembrane regions (helical) follow at residues 9–29, 34–54, 63–83, 97–117, 121–141, 144–164, and 212–232; these read TPYF…ILFE, FFLF…LYLT, IGGD…AIPL, IIGG…TFAK, FAND…IALP, AGIG…GVII, and IALV…VAIF.

Belongs to the CidB/LrgB family. LrgB subfamily.

It is found in the cell membrane. Functionally, inhibits the expression or activity of extracellular murein hydrolases by interacting, possibly with LrgA, with the holin-like proteins CidA and/or CidB. The LrgAB and CidAB proteins may affect the proton motive force of the membrane. May be involved in programmed cell death (PCD), possibly triggering PCD in response to antibiotics and environmental stresses. This is Antiholin-like protein LrgB from Staphylococcus aureus (strain Mu3 / ATCC 700698).